The chain runs to 389 residues: 5-amino-6-(D-ribitylamino)uracil--L-tyrosine 4-hydroxyphenyl transferase (389 aa).

In terms of domain architecture, Radical SAM core spans 56–298 (VSYVINRNIN…QAVARLFFGR (243 aa)). 3 residues coordinate [4Fe-4S] cluster: Cys70, Cys74, and Cys77.

Belongs to the radical SAM superfamily. CofH family. In terms of assembly, consists of two subunits, CofG and CofH. [4Fe-4S] cluster is required as a cofactor.

The catalysed reaction is 5-amino-6-(D-ribitylamino)uracil + L-tyrosine + S-adenosyl-L-methionine = 5-amino-5-(4-hydroxybenzyl)-6-(D-ribitylimino)-5,6-dihydrouracil + 2-iminoacetate + 5'-deoxyadenosine + L-methionine + H(+). Its pathway is cofactor biosynthesis; coenzyme F0 biosynthesis. In terms of biological role, catalyzes the radical-mediated synthesis of 5-amino-5-(4-hydroxybenzyl)-6-(D-ribitylimino)-5,6-dihydrouracil from 5-amino-6-(D-ribitylamino)uracil and L-tyrosine. This Gloeobacter violaceus (strain ATCC 29082 / PCC 7421) protein is 5-amino-6-(D-ribitylamino)uracil--L-tyrosine 4-hydroxyphenyl transferase.